Consider the following 264-residue polypeptide: Thymidylate synthase (264 aa).

Arg21 serves as a coordination point for dUMP. His51 is a (6R)-5,10-methylene-5,6,7,8-tetrahydrofolate binding site. 126–127 (RR) provides a ligand contact to dUMP. The active-site Nucleophile is Cys146. Residues 166–169 (RSCD), Asn177, and 207–209 (HLY) contribute to the dUMP site. Residue Asp169 coordinates (6R)-5,10-methylene-5,6,7,8-tetrahydrofolate. Ala263 is a binding site for (6R)-5,10-methylene-5,6,7,8-tetrahydrofolate.

The protein belongs to the thymidylate synthase family. Bacterial-type ThyA subfamily. As to quaternary structure, homodimer.

It is found in the cytoplasm. It carries out the reaction dUMP + (6R)-5,10-methylene-5,6,7,8-tetrahydrofolate = 7,8-dihydrofolate + dTMP. Its pathway is pyrimidine metabolism; dTTP biosynthesis. In terms of biological role, catalyzes the reductive methylation of 2'-deoxyuridine-5'-monophosphate (dUMP) to 2'-deoxythymidine-5'-monophosphate (dTMP) while utilizing 5,10-methylenetetrahydrofolate (mTHF) as the methyl donor and reductant in the reaction, yielding dihydrofolate (DHF) as a by-product. This enzymatic reaction provides an intracellular de novo source of dTMP, an essential precursor for DNA biosynthesis. In Shewanella denitrificans (strain OS217 / ATCC BAA-1090 / DSM 15013), this protein is Thymidylate synthase.